Reading from the N-terminus, the 172-residue chain is Low molecular mass early light-inducible protein HV90, chloroplastic (172 aa).

The N-terminal 38 residues, 1–38, are a transit peptide targeting the chloroplast; it reads MATMMSMSSFAGAAVVPRSSASSFGARSLPALGRRALV. Transmembrane regions (helical) follow at residues 106 to 126 and 150 to 170; these read GQAWFAYTVAVLSMASLVPLL and FAMLGLVALAATEIITGAPFI.

This sequence belongs to the ELIP/psbS family.

It localises to the plastid. It is found in the chloroplast membrane. Functionally, probably involved in the integration of pigments into the mature pigment-protein complexes. This chain is Low molecular mass early light-inducible protein HV90, chloroplastic, found in Hordeum vulgare (Barley).